We begin with the raw amino-acid sequence, 72 residues long: Large ribosomal subunit protein bL28 (72 aa).

It belongs to the bacterial ribosomal protein bL28 family.

The chain is Large ribosomal subunit protein bL28 from Chlorobium phaeovibrioides (strain DSM 265 / 1930) (Prosthecochloris vibrioformis (strain DSM 265)).